We begin with the raw amino-acid sequence, 200 residues long: Recombination protein RecR (200 aa).

The C4-type zinc finger occupies 59 to 74 (CGTCGSLDVTDPCAVC). In terms of domain architecture, Toprim spans 82–177 (RLLCVVEEVG…PVTMLARGVP (96 aa)).

It belongs to the RecR family.

Its function is as follows. May play a role in DNA repair. It seems to be involved in an RecBC-independent recombinational process of DNA repair. It may act with RecF and RecO. This is Recombination protein RecR from Caulobacter vibrioides (strain ATCC 19089 / CIP 103742 / CB 15) (Caulobacter crescentus).